Consider the following 177-residue polypeptide: Protein FATTY ACID EXPORT 4, chloroplastic (177 aa).

The transit peptide at 1–63 directs the protein to the chloroplast; that stretch reads MWSLALTLPS…AELSELAPVV (63 aa). A run of 3 helical transmembrane segments spans residues 85 to 105, 111 to 131, and 140 to 160; these read KGSL…YFLT, RVLG…VFGF, and VPAG…VMAY.

This sequence belongs to the TMEM14 family.

It localises to the plastid. It is found in the chloroplast membrane. Its function is as follows. May be involved in free fatty acids export from the plastids. This is Protein FATTY ACID EXPORT 4, chloroplastic from Arabidopsis thaliana (Mouse-ear cress).